Reading from the N-terminus, the 323-residue chain is MIQPDPTVLALALLLDLCLGDPRWLPHPVVMIGRLITFLETLLRRCMANERIAGVLLLALTVTSAASVTWLMVWGSARLHALAGLMVAALLSSTCLAARSLQRESCLVADALDAGDIASARVKLSYIVGRDTVDLDEEEIWRALIETVAENTTDGIIAPLFWLALGGPVAGMAFKAVSTLDSMVGYKNERYLRLGWASARMDDLVNYIPARLTALLMVMVAPLIGLSQANAASIALRDRLNHPSPNSAHPESAAAGALGIRLGGPSTYGGLLSVKQFIGDPLRSIDGQAYRGMIRLMYATTLAMAVISLATAALLRGIHVTQL.

Helical transmembrane passes span isoleucine 52–methionine 72, valine 73–serine 93, aspartate 154–phenylalanine 174, alanine 214–isoleucine 234, and isoleucine 294–leucine 314.

This sequence belongs to the CobD/CbiB family.

The protein localises to the cell membrane. The protein operates within cofactor biosynthesis; adenosylcobalamin biosynthesis. Functionally, converts cobyric acid to cobinamide by the addition of aminopropanol on the F carboxylic group. The protein is Cobalamin biosynthesis protein CobD of Pelobacter propionicus (strain DSM 2379 / NBRC 103807 / OttBd1).